The following is a 308-amino-acid chain: uncharacterized protein (308 aa).

This is an uncharacterized protein from Acanthamoeba polyphaga (Amoeba).